Consider the following 416-residue polypeptide: UDP-N-acetylglucosamine 1-carboxyvinyltransferase (416 aa).

22 to 23 (KN) lines the phosphoenolpyruvate pocket. Residue R92 participates in UDP-N-acetyl-alpha-D-glucosamine binding. The active-site Proton donor is the C116. C116 is modified (2-(S-cysteinyl)pyruvic acid O-phosphothioketal). UDP-N-acetyl-alpha-D-glucosamine-binding positions include 121–125 (RPVDQ), D304, and I326.

It belongs to the EPSP synthase family. MurA subfamily.

The protein resides in the cytoplasm. The enzyme catalyses phosphoenolpyruvate + UDP-N-acetyl-alpha-D-glucosamine = UDP-N-acetyl-3-O-(1-carboxyvinyl)-alpha-D-glucosamine + phosphate. It functions in the pathway cell wall biogenesis; peptidoglycan biosynthesis. In terms of biological role, cell wall formation. Adds enolpyruvyl to UDP-N-acetylglucosamine. In Cupriavidus taiwanensis (strain DSM 17343 / BCRC 17206 / CCUG 44338 / CIP 107171 / LMG 19424 / R1) (Ralstonia taiwanensis (strain LMG 19424)), this protein is UDP-N-acetylglucosamine 1-carboxyvinyltransferase.